The chain runs to 187 residues: Elongation factor P (187 aa).

This sequence belongs to the elongation factor P family.

It localises to the cytoplasm. The protein operates within protein biosynthesis; polypeptide chain elongation. Involved in peptide bond synthesis. Stimulates efficient translation and peptide-bond synthesis on native or reconstituted 70S ribosomes in vitro. Probably functions indirectly by altering the affinity of the ribosome for aminoacyl-tRNA, thus increasing their reactivity as acceptors for peptidyl transferase. This Gloeobacter violaceus (strain ATCC 29082 / PCC 7421) protein is Elongation factor P.